Consider the following 264-residue polypeptide: Transformer-2 sex-determining protein (264 aa).

Residues 1 to 96 form a disordered region; the sequence is MDREPLSSGR…HKSREHPQAS (96 aa). A compositionally biased stretch (basic residues) spans 13 to 22; sequence CSARYKHKRS. Residues 23–33 are compositionally biased toward low complexity; sequence ASSSSAGTTSS. At Ser-40 the chain carries Phosphoserine. Residues 47-61 are compositionally biased toward basic residues; sequence SRRHQRSSSRRRSRS. The segment covering 71-85 has biased composition (basic and acidic residues); the sequence is EPRHRSGRSSRDRER. Residues 97 to 175 form the RRM domain; that stretch reads RCIGVFGLNT…RRIRVDFSIT (79 aa). The segment at 176-196 is linker; that stretch reads QRAHTPTPGVYLGRQPRGKAP. Residues 179 to 264 are disordered; sequence HTPTPGVYLG…PQLRRTSSRY (86 aa). Thr-180 is subject to Phosphothreonine. A compositionally biased stretch (basic residues) spans 191-206; the sequence is PRGKAPRSFSPRRGRR. Positions 207–234 are enriched in basic and acidic residues; the sequence is VYHDRSASPYDNYRDRYDYRNDRYDRNL. Phosphoserine is present on residues Ser-212 and Ser-214. The segment covering 235–250 has biased composition (basic residues); it reads RRSPSRNRYTRNRSYS. At Ser-254 the chain carries Phosphoserine.

Belongs to the splicing factor SR family. Extensively phosphorylated on serine residues in the RS domain. Isoform Tmaj and isoform Tmin are expressed in males and females. Isoform msTmaj and isoform msTmin are present only in male germ cells.

Its function is as follows. Required for female sex determination in somatic cells and for spermatogenesis in male germ cells. Positive regulator of female-specific splicing and/or polyadenylation of doublesex (dsx) pre-mRNA. Splicing requires an enhancer complex, dsxRE (dsx repeat element: which contains six copies of a 13-nucleotide repeat and a purine-rich enhancer (PRE)). DsxRE is formed through cooperative interactions between tra, tra2 and the sr proteins, and these interactions require both the repeat sequences and PRE. PRE is required for specific binding of tra2 to the dsxRE. Protein-RNA and protein-protein interactions are involved in tra-2 dependent activation and repression of alternative splicing. Together with tra-2, plays a role in switching fru splicing from the male-specific pattern to the female-specific pattern through activation of the female-specific fru 5'-splice site. This chain is Transformer-2 sex-determining protein (tra2), found in Drosophila melanogaster (Fruit fly).